A 2254-amino-acid chain; its full sequence is Acetyl-CoA carboxylase 1 (2254 aa).

One can recognise a Biotin carboxylation domain in the interval 36–543 (PIHSILIANN…HTGWLDSRIA (508 aa)). Residues 189–381 (NSNLVTIPEE…LPAAQVAVGM (193 aa)) enclose the ATP-grasp domain. Residue 215–272 (CQVVGYPAMIKASWGGGGKGIRKVHNDDEVRALFKQVQGEVPGSPIFIMKVASQSRHL) participates in ATP binding. Mg(2+) is bound by residues glutamate 338, glutamate 352, and asparagine 354. Mn(2+)-binding residues include glutamate 338, glutamate 352, and asparagine 354. The active site involves arginine 356. The region spanning 670-744 (LQNDHDPSKL…QAGELIANLD (75 aa)) is the Biotinyl-binding domain. Lysine 711 is modified (N6-biotinyllysine). At threonine 1031 the chain carries Phosphothreonine. Residue serine 1192 is modified to Phosphoserine. The CoA carboxyltransferase N-terminal domain occupies 1492-1831 (QYKPLGYLDR…YVGGPLPVLA (340 aa)). Positions 1492–2150 (QYKPLGYLDR…ESSLVKNVRE (659 aa)) are carboxyltransferase. CoA is bound by residues arginine 1740, lysine 2041, and arginine 2043. The CoA carboxyltransferase C-terminal domain maps to 1835–2150 (PPERIVEYVP…ESSLVKNVRE (316 aa)).

As to quaternary structure, homodimer. Biotin serves as cofactor. Mg(2+) is required as a cofactor. It depends on Mn(2+) as a cofactor. Expressed in roots, trichomes, epidermal leaf cells, siliques, petals, anthers, and seeds.

It is found in the cytoplasm. The protein resides in the cytosol. The catalysed reaction is hydrogencarbonate + acetyl-CoA + ATP = malonyl-CoA + ADP + phosphate + H(+). The enzyme catalyses N(6)-biotinyl-L-lysyl-[protein] + hydrogencarbonate + ATP = N(6)-carboxybiotinyl-L-lysyl-[protein] + ADP + phosphate + H(+). It functions in the pathway lipid metabolism; malonyl-CoA biosynthesis; malonyl-CoA from acetyl-CoA: step 1/1. In terms of biological role, multifunctional enzyme that catalyzes the carboxylation of acetyl-CoA, forming malonyl-CoA, which is used in the plastid for fatty acid synthesis and in the cytosol in various biosynthetic pathways including fatty acid elongation. Required for very long chain fatty acids elongation. Necessary for embryo and plant development. Plays a central function in embryo morphogenesis, especially in apical meristem development. Involved in cell proliferation and tissue patterning. May act as a repressor of cytokinin response. The sequence is that of Acetyl-CoA carboxylase 1 (ACC1) from Arabidopsis thaliana (Mouse-ear cress).